The primary structure comprises 171 residues: Xanthine-guanine phosphoribosyltransferase (171 aa).

5-phospho-alpha-D-ribose 1-diphosphate-binding positions include 51-52 and 106-114; these read RG and DDLVDSGKT. D107 provides a ligand contact to Mg(2+). 2 residues coordinate guanine: D110 and I153. Residues D110 and I153 each contribute to the xanthine site. GMP is bound by residues 110–114 and 152–153; these read DSGKT and WI.

This sequence belongs to the purine/pyrimidine phosphoribosyltransferase family. XGPT subfamily. As to quaternary structure, homotetramer. The cofactor is Mg(2+).

The protein resides in the cell inner membrane. The enzyme catalyses GMP + diphosphate = guanine + 5-phospho-alpha-D-ribose 1-diphosphate. It catalyses the reaction XMP + diphosphate = xanthine + 5-phospho-alpha-D-ribose 1-diphosphate. The catalysed reaction is IMP + diphosphate = hypoxanthine + 5-phospho-alpha-D-ribose 1-diphosphate. The protein operates within purine metabolism; GMP biosynthesis via salvage pathway; GMP from guanine: step 1/1. It participates in purine metabolism; XMP biosynthesis via salvage pathway; XMP from xanthine: step 1/1. Its function is as follows. Purine salvage pathway enzyme that catalyzes the transfer of the ribosyl-5-phosphate group from 5-phospho-alpha-D-ribose 1-diphosphate (PRPP) to the N9 position of the 6-oxopurines guanine and xanthine to form the corresponding ribonucleotides GMP (guanosine 5'-monophosphate) and XMP (xanthosine 5'-monophosphate), with the release of PPi. To a lesser extent, also acts on hypoxanthine. This chain is Xanthine-guanine phosphoribosyltransferase, found in Ruegeria pomeroyi (strain ATCC 700808 / DSM 15171 / DSS-3) (Silicibacter pomeroyi).